We begin with the raw amino-acid sequence, 351 residues long: Quinolinate phosphoribosyltransferase [decarboxylating] 2, mitochondrial (351 aa).

Residues arginine 142, 173–175 (TRK), arginine 197, lysine 207, glutamate 240, aspartate 267, 299–301 (SGN), and 320–322 (SGA) contribute to the substrate site.

This sequence belongs to the NadC/ModD family.

The protein localises to the mitochondrion. The catalysed reaction is nicotinate beta-D-ribonucleotide + CO2 + diphosphate = quinolinate + 5-phospho-alpha-D-ribose 1-diphosphate + 2 H(+). Its pathway is alkaloid biosynthesis; nicotine biosynthesis. It functions in the pathway cofactor biosynthesis; NAD(+) biosynthesis; nicotinate D-ribonucleotide from quinolinate: step 1/1. In terms of biological role, involved in the biosynthesis of pyridine alkaloid natural products, leading mainly to the production of anabasine, anatabine, nicotine and nornicotine, effective deterrents against herbivores with antiparasitic and pesticide properties (neurotoxins); nornicotine serves as the precursor in the synthesis of the carcinogen compound N'-nitrosonornicotine (NNN). Involved in the catabolism of quinolinic acid (QA). The chain is Quinolinate phosphoribosyltransferase [decarboxylating] 2, mitochondrial from Nicotiana glauca (Glaucous tobacco).